A 113-amino-acid chain; its full sequence is Sperm-associated antigen 11B (113 aa).

Positions 1–26 (MIPRLLPFFASLLFAALLFPGLSNAS) are cleaved as a signal peptide. Cystine bridges form between C80/C108, C87/C101, and C91/C109.

Belongs to the beta-defensin family.

It localises to the secreted. Its function is as follows. Has antimicrobial activity against E.coli. Plays a role in the defense response in the male reproductive tract, contributing to sperm maturation, storage and protection. The sequence is that of Sperm-associated antigen 11B from Mus musculus (Mouse).